A 401-amino-acid chain; its full sequence is Probable trafficking protein particle complex subunit 13 homolog (401 aa).

This sequence belongs to the TRAPPC13 family.

The protein is Probable trafficking protein particle complex subunit 13 homolog of Caenorhabditis briggsae.